Here is a 212-residue protein sequence, read N- to C-terminus: Thymidylate kinase (212 aa).

10-17 provides a ligand contact to ATP; sequence GPDGSGKS.

It belongs to the thymidylate kinase family.

The catalysed reaction is dTMP + ATP = dTDP + ADP. Phosphorylation of dTMP to form dTDP in both de novo and salvage pathways of dTTP synthesis. The chain is Thymidylate kinase from Exiguobacterium sp. (strain ATCC BAA-1283 / AT1b).